Consider the following 544-residue polypeptide: Phenylalanine--tRNA ligase beta subunit (544 aa).

Residues L270–V346 enclose the B5 domain. Mg(2+) is bound by residues D324, D330, E333, and D334.

This sequence belongs to the phenylalanyl-tRNA synthetase beta subunit family. Type 2 subfamily. As to quaternary structure, tetramer of two alpha and two beta subunits. It depends on Mg(2+) as a cofactor.

It localises to the cytoplasm. The catalysed reaction is tRNA(Phe) + L-phenylalanine + ATP = L-phenylalanyl-tRNA(Phe) + AMP + diphosphate + H(+). The polypeptide is Phenylalanine--tRNA ligase beta subunit (Methanosarcina barkeri (strain Fusaro / DSM 804)).